Here is a 257-residue protein sequence, read N- to C-terminus: tRNA pseudouridine synthase A (257 aa).

The active-site Nucleophile is Asp53. Residue Tyr111 participates in substrate binding.

Belongs to the tRNA pseudouridine synthase TruA family. In terms of assembly, homodimer.

The catalysed reaction is uridine(38/39/40) in tRNA = pseudouridine(38/39/40) in tRNA. Its function is as follows. Formation of pseudouridine at positions 38, 39 and 40 in the anticodon stem and loop of transfer RNAs. The protein is tRNA pseudouridine synthase A of Xanthomonas oryzae pv. oryzae (strain MAFF 311018).